The sequence spans 391 residues: Enoyl-CoA delta isomerase 2 (391 aa).

Residues methionine 1–alanine 36 constitute a mitochondrion transit peptide. The ACB domain maps to threonine 37–alanine 122. At lysine 49 the chain carries N6-acetyllysine; alternate. An N6-succinyllysine; alternate modification is found at lysine 49. N6-succinyllysine is present on lysine 53. Lysine 60 carries the post-translational modification N6-acetyllysine; alternate. The residue at position 60 (lysine 60) is an N6-succinyllysine; alternate. Tyrosine 64–lysine 68 is a binding site for an acyl-CoA. Residues lysine 68, lysine 79, and lysine 88 each carry the N6-succinyllysine modification. Lysine 90 carries the N6-acetyllysine; alternate modification. Lysine 90 bears the N6-succinyllysine; alternate mark. Lysine 90 provides a ligand contact to an acyl-CoA. Serine 99 is modified (phosphoserine). Tyrosine 109 lines the an acyl-CoA pocket. The residue at position 117 (serine 117) is a Phosphoserine. N6-succinyllysine occurs at positions 127 and 159. The interval threonine 149–proline 319 is ECH-like. Substrate is bound at residue serine 196 to leucine 200. An N6-succinyllysine modification is found at lysine 286. A Microbody targeting signal motif is present at residues proline 389–leucine 391.

In the C-terminal section; belongs to the enoyl-CoA hydratase/isomerase family. Liver (at protein level).

It localises to the peroxisome matrix. The protein localises to the mitochondrion. It catalyses the reaction a (3Z)-enoyl-CoA = a 4-saturated (2E)-enoyl-CoA. The enzyme catalyses a (3E)-enoyl-CoA = a 4-saturated (2E)-enoyl-CoA. The catalysed reaction is (2E)-tetradecenoyl-CoA = (3Z)-tetradecenoyl-CoA. It carries out the reaction (3E)-tetradecenoyl-CoA = (2E)-tetradecenoyl-CoA. It catalyses the reaction (3E)-octenoyl-CoA = (2E)-octenoyl-CoA. The enzyme catalyses (3Z)-octenoyl-CoA = (2E)-octenoyl-CoA. The catalysed reaction is (3E)-nonenoyl-CoA = (2E)-nonenoyl-CoA. It functions in the pathway lipid metabolism; fatty acid beta-oxidation. Functionally, able to isomerize both 3-cis and 3-trans double bonds into the 2-trans form in a range of enoyl-CoA species. Has a preference for 3-trans substrates. The sequence is that of Enoyl-CoA delta isomerase 2 from Rattus norvegicus (Rat).